Consider the following 494-residue polypeptide: uncharacterized protein (494 aa).

2 VOC domains span residues 18-174 and 229-408; these read FIDC…FINR and SLDH…FGIL. Residues His-232, His-349, and Glu-460 each contribute to the Fe cation site.

This sequence belongs to the 4HPPD family. Requires Fe cation as cofactor.

May have dioxygenase activity. This is an uncharacterized protein from Dictyostelium discoideum (Social amoeba).